We begin with the raw amino-acid sequence, 156 residues long: 6,7-dimethyl-8-ribityllumazine synthase (156 aa).

Residues F23, 57–59 (SFE), and 81–83 (AVI) contribute to the 5-amino-6-(D-ribitylamino)uracil site. 86–87 (GT) lines the (2S)-2-hydroxy-3-oxobutyl phosphate pocket. H89 functions as the Proton donor in the catalytic mechanism. F114 lines the 5-amino-6-(D-ribitylamino)uracil pocket. A (2S)-2-hydroxy-3-oxobutyl phosphate-binding site is contributed by R128.

This sequence belongs to the DMRL synthase family. As to quaternary structure, forms an icosahedral capsid composed of 60 subunits, arranged as a dodecamer of pentamers.

The catalysed reaction is (2S)-2-hydroxy-3-oxobutyl phosphate + 5-amino-6-(D-ribitylamino)uracil = 6,7-dimethyl-8-(1-D-ribityl)lumazine + phosphate + 2 H2O + H(+). The protein operates within cofactor biosynthesis; riboflavin biosynthesis; riboflavin from 2-hydroxy-3-oxobutyl phosphate and 5-amino-6-(D-ribitylamino)uracil: step 1/2. Functionally, catalyzes the formation of 6,7-dimethyl-8-ribityllumazine by condensation of 5-amino-6-(D-ribitylamino)uracil with 3,4-dihydroxy-2-butanone 4-phosphate. This is the penultimate step in the biosynthesis of riboflavin. This chain is 6,7-dimethyl-8-ribityllumazine synthase, found in Alkalilimnicola ehrlichii (strain ATCC BAA-1101 / DSM 17681 / MLHE-1).